The following is a 333-amino-acid chain: Protein APEM9 (333 aa).

The Cytoplasmic segment spans residues 1 to 90; the sequence is MEATDIWGEI…ELRDVFGEVA (90 aa). Residues 91–102 form a helical membrane-spanning segment; the sequence is AIPVQVLLTGVC. Residues 103 to 268 lie on the Peroxisomal side of the membrane; sequence LQISNGSYLG…KVGNTQFSMS (166 aa). A helical membrane pass occupies residues 269-285; it reads RGKVAVSLVGLIICYAL. Residues 286-333 lie on the Cytoplasmic side of the membrane; the sequence is KRKRAALIRIIRRQMESTRKAIVDFWKLAFSYQVNPLAAIQSIPSTTT.

Interacts with PEX6 and PEX19-1, but not with PEX1. Interacts (via N-terminus) with PEX13, and (via N-terminus and C-terminus) with PEX16. As to expression, expressed in roots, leaves, stems, flowers, buds and fruits.

The protein resides in the peroxisome membrane. Functionally, involved in peroxisome biogenesis and matrix protein import. Required for pollen maturation and in vivo germination via its role in peroxisomal function, which partially involves jasmonic acid biosynthesis. Transported to peroxisomes via the interaction with PEX19-1. Required for peroxisomal protein import by acting as an anchoring protein for the AAA ATPase complex, which consists of PEX1 and PEX6. In Arabidopsis thaliana (Mouse-ear cress), this protein is Protein APEM9.